Reading from the N-terminus, the 827-residue chain is Periplasmic nitrate reductase (827 aa).

Residues 1–32 constitute a signal peptide (tat-type signal); that stretch reads MELNRRDFMKANAAAAAALAAGITLPVKNVYA. The 57-residue stretch at 37 to 93 folds into the 4Fe-4S Mo/W bis-MGD-type domain; sequence IKWDKAPCRFCGTGCSVLVGTQNGRMVASQGDPDAEVNRGLNCIKGYFLPKIIYGKD. [4Fe-4S] cluster contacts are provided by Cys44, Cys47, Cys51, and Cys79. Mo-bis(molybdopterin guanine dinucleotide) contacts are provided by residues Lys81, Gln148, Asn173, Cys177, 210–217, 241–245, Met371, Gln375, Asn481, 507–508, Lys530, Asp557, and 717–726; these read WGSNMAEM, STFEH, SD, and TGRVLEHWHS. Residue Phe793 participates in substrate binding. Residues Asn801 and Lys818 each coordinate Mo-bis(molybdopterin guanine dinucleotide).

The protein belongs to the prokaryotic molybdopterin-containing oxidoreductase family. NasA/NapA/NarB subfamily. In terms of assembly, component of the periplasmic nitrate reductase NapAB complex composed of NapA and NapB. [4Fe-4S] cluster serves as cofactor. The cofactor is Mo-bis(molybdopterin guanine dinucleotide). Post-translationally, predicted to be exported by the Tat system. The position of the signal peptide cleavage has not been experimentally proven.

The protein resides in the periplasm. The enzyme catalyses 2 Fe(II)-[cytochrome] + nitrate + 2 H(+) = 2 Fe(III)-[cytochrome] + nitrite + H2O. Its function is as follows. Catalytic subunit of the periplasmic nitrate reductase complex NapAB. Receives electrons from NapB and catalyzes the reduction of nitrate to nitrite. The chain is Periplasmic nitrate reductase from Glaesserella parasuis serovar 5 (strain SH0165) (Haemophilus parasuis).